Reading from the N-terminus, the 395-residue chain is Zinc finger protein 385D (395 aa).

A Matrin-type 1 zinc finger spans residues 80 to 110; that stretch reads ISCNICQLRFNSDSQAAAHYKGTKHAKKLKA. Positions 169–193 are enriched in polar residues; the sequence is MTTEITSKVEKSPTTATGNSSCPST. Residues 169-194 are disordered; the sequence is MTTEITSKVEKSPTTATGNSSCPSTE. 2 consecutive Matrin-type zinc fingers follow at residues 204 to 234 and 267 to 297; these read LYCS…MLEA and FHCE…RAAG. The interval 282 to 309 is disordered; it reads LKQHISSRRHKDRAAGKPPKPKYSPYNK.

It is found in the nucleus. The sequence is that of Zinc finger protein 385D (ZNF385D) from Homo sapiens (Human).